Here is a 193-residue protein sequence, read N- to C-terminus: Peptidyl-tRNA hydrolase (193 aa).

TRNA is bound at residue Y17. H22 (proton acceptor) is an active-site residue. TRNA-binding residues include Y68, N70, and N116.

The protein belongs to the PTH family. In terms of assembly, monomer.

The protein resides in the cytoplasm. It catalyses the reaction an N-acyl-L-alpha-aminoacyl-tRNA + H2O = an N-acyl-L-amino acid + a tRNA + H(+). Hydrolyzes ribosome-free peptidyl-tRNAs (with 1 or more amino acids incorporated), which drop off the ribosome during protein synthesis, or as a result of ribosome stalling. Its function is as follows. Catalyzes the release of premature peptidyl moieties from peptidyl-tRNA molecules trapped in stalled 50S ribosomal subunits, and thus maintains levels of free tRNAs and 50S ribosomes. This chain is Peptidyl-tRNA hydrolase, found in Acinetobacter baumannii (strain AB0057).